The sequence spans 247 residues: MASLLNARTAVITGGAQGLGLAIGQRFVAEGARVVLGDVNLEATEVAAKRLGGDDVALAVRCDVTQADDVDILIRTAVERFGGLDVMVNNAGITRDATMRTMTEEQFDQVIAVHLKGTWNGTRLAAAIMRERKRGAIVNMSSVSGKVGMVGQTNYSAAKAGIVGMTKAAAKELAHLGIRVNAIAPGLIRSAMTEAMPQRIWDQKLAEVPMGRAGEPSEVASVAVFLASDLSSYMTGTVLDVTGGRFI.

NAD(+) contacts are provided by Leu-19, Asp-38, Asp-63, and Val-64. Ser-142 contributes to the substrate binding site. The NAD(+) site is built by Tyr-155, Lys-159, and Ser-190. Tyr-155 serves as the catalytic Proton acceptor.

This sequence belongs to the short-chain dehydrogenases/reductases (SDR) family.

This is an uncharacterized protein from Mycobacterium bovis (strain ATCC BAA-935 / AF2122/97).